Reading from the N-terminus, the 94-residue chain is Exodeoxyribonuclease 7 small subunit (94 aa).

Positions 1–21 (MPRAPNDAPSASATPSATPAS) are disordered.

It belongs to the XseB family. As to quaternary structure, heterooligomer composed of large and small subunits.

It localises to the cytoplasm. The catalysed reaction is Exonucleolytic cleavage in either 5'- to 3'- or 3'- to 5'-direction to yield nucleoside 5'-phosphates.. Bidirectionally degrades single-stranded DNA into large acid-insoluble oligonucleotides, which are then degraded further into small acid-soluble oligonucleotides. In Ralstonia pickettii (strain 12J), this protein is Exodeoxyribonuclease 7 small subunit.